The primary structure comprises 626 residues: Probable potassium transport system protein Kup (626 aa).

A run of 13 helical transmembrane segments spans residues 8–28 (VALPAMTLAALGVVFGDIGTS), 44–64 (ISEATVFGILSLIFWCITLSI), 102–122 (IYLIALGFVGASLFFGDGIIT), 139–159 (PAFDRWLIPIGLGILTALFMV), 171–191 (FGPITMLWFISIGALGLYSII), 196–216 (ILWFINPIWAIEFAIHQPFVA), 217–237 (FVAMGSVVLTMTGGEALYADM), 249–269 (WFIVVCPSLMLNYAGQGALLL), 281–301 (LLVPEWALFPMIGLATAAAVI), 339–359 (IYVPFINWVLYISVFFLIILF), 377–397 (MLCVTILISVLAYGAWGWPWW), 399–419 (VTLFAVPFLALDGIFVASTSL), and 421–441 (ILSGGWVPFVIGVVVFTILMT).

This sequence belongs to the HAK/KUP transporter (TC 2.A.72) family.

The protein localises to the cell inner membrane. The enzyme catalyses K(+)(in) + H(+)(in) = K(+)(out) + H(+)(out). Functionally, transport of potassium into the cell. Likely operates as a K(+):H(+) symporter. This is Probable potassium transport system protein Kup from Acinetobacter baylyi (strain ATCC 33305 / BD413 / ADP1).